Here is a 290-residue protein sequence, read N- to C-terminus: uncharacterized protein (290 aa).

Disordered stretches follow at residues 17–91 (QTIS…EKNS) and 220–259 (DKAS…QMPN). Over residues 40 to 50 (NITTHLSTGNL) the composition is skewed to polar residues. The segment covering 66-83 (STKKGKRVSKPGTKKKEK) has biased composition (basic residues). A compositionally biased stretch (basic and acidic residues) spans 233-249 (EGEKDGNAEQGKQKEVQ).

This is an uncharacterized protein from Saccharomyces cerevisiae (strain ATCC 204508 / S288c) (Baker's yeast).